A 170-amino-acid polypeptide reads, in one-letter code: MAKHQVNYTANGGLPIVLTTVDRLVQWGRSNSLWALSYGLACCAIEMMASGASRYDFDRFGTIFRASPRHSEVMIIAGTLTKKHAEFTRRLYDQMPEPKWVISMGSCANTGGMFNTYSTVQGVDRIIPVDIYLPGCAPRPETLQYALMILQKKIRRQSAFRAQGVKRLEA.

4 residues coordinate [4Fe-4S] cluster: Cys42, Cys43, Cys107, and Cys136.

It belongs to the complex I 20 kDa subunit family. In terms of assembly, NDH-1 is composed of 14 different subunits. Subunits NuoB, C, D, E, F, and G constitute the peripheral sector of the complex. [4Fe-4S] cluster is required as a cofactor.

The protein resides in the cell inner membrane. It catalyses the reaction a quinone + NADH + 5 H(+)(in) = a quinol + NAD(+) + 4 H(+)(out). Its function is as follows. NDH-1 shuttles electrons from NADH, via FMN and iron-sulfur (Fe-S) centers, to quinones in the respiratory chain. The immediate electron acceptor for the enzyme in this species is believed to be ubiquinone. Couples the redox reaction to proton translocation (for every two electrons transferred, four hydrogen ions are translocated across the cytoplasmic membrane), and thus conserves the redox energy in a proton gradient. The sequence is that of NADH-quinone oxidoreductase subunit B from Campylobacter curvus (strain 525.92).